A 400-amino-acid chain; its full sequence is Golgin-45 (400 aa).

Residues 1-36 are disordered; that stretch reads MEKMTTLKSFESKGILTSTPIRGAGDGMETEEPPKS. The short motif at 22-26 is the Tankyrase-binding motif element; sequence RGAGD. Position 53 is a phosphoserine (serine 53). Residues 126-263 are a coiled coil; the sequence is LSEVKKVLEK…LSEREQFRQE (138 aa). Serine 356 carries the phosphoserine modification. The essential for interaction with GORASP2 stretch occupies residues 394 to 400; the sequence is QGELLAL.

As to quaternary structure, interacts with GORASP2. Interacts with the GTP-bound form of RAB2, but not with other Golgi Rab proteins. Identified in a complex with RAB2 and GORASP2. Post-translationally, ADP-ribosylated by tankyrase TNKS and TNKS2. Poly-ADP-ribosylated protein is recognized by RNF146, followed by ubiquitination. Ubiquitinated by RNF146 when poly-ADP-ribosylated, leading to its degradation.

The protein resides in the golgi apparatus membrane. Functionally, required for normal Golgi structure and for protein transport from the endoplasmic reticulum (ER) through the Golgi apparatus to the cell surface. This is Golgin-45 from Rattus norvegicus (Rat).